The chain runs to 293 residues: 4-hydroxy-tetrahydrodipicolinate synthase (293 aa).

A pyruvate-binding site is contributed by threonine 45. The Proton donor/acceptor role is filled by tyrosine 133. The Schiff-base intermediate with substrate role is filled by lysine 161. Residue isoleucine 203 participates in pyruvate binding.

Belongs to the DapA family. Homotetramer; dimer of dimers.

The protein localises to the cytoplasm. It catalyses the reaction L-aspartate 4-semialdehyde + pyruvate = (2S,4S)-4-hydroxy-2,3,4,5-tetrahydrodipicolinate + H2O + H(+). It functions in the pathway amino-acid biosynthesis; L-lysine biosynthesis via DAP pathway; (S)-tetrahydrodipicolinate from L-aspartate: step 3/4. Functionally, catalyzes the condensation of (S)-aspartate-beta-semialdehyde [(S)-ASA] and pyruvate to 4-hydroxy-tetrahydrodipicolinate (HTPA). The chain is 4-hydroxy-tetrahydrodipicolinate synthase from Exiguobacterium sibiricum (strain DSM 17290 / CCUG 55495 / CIP 109462 / JCM 13490 / 255-15).